We begin with the raw amino-acid sequence, 421 residues long: MASTFTSDTLPADHKAAIRQMKHALRAQLGDVQQIFNQLSDDIATRVAEINALKAQGDAVWPVLSYADIKAGHVTAEQREQIKRRGCAVIKGHFPREQALGWDQSMLDYLDRNRFDEVYKGPGDNFFGTLSASRPEIYPIYWSQAQMQARQSEEMANAQSFLNRLWTFESDGKQWFNPDVSVIYPDRIRRRPPGTTSKGLGAHTDSGALERWLLPAYQRVFANVFNGNLAQYDPWHAAHRTEVEEYTVDNTTKCSVFRTFQGWTALSDMLPGQGLLHVVPIPEAMAYVLLRPLLDDVPEDELCGVAPGRVLPVSEQWHPLLIEALTSIPKLEAGDSVWWHCDVIHSVAPVENQQGWGNVMYIPAAPMCEKNLAYAHKVKAALEKGASPGDFPREDYETNWEGRFTLADLNIHGKRALGMDV.

This is an uncharacterized protein from Escherichia coli (strain K12).